Consider the following 310-residue polypeptide: Olfactory receptor 8B12 (310 aa).

The Extracellular portion of the chain corresponds to 1-24 (MAAKNSSVTEFILEGLTHQPGLRI). An N-linked (GlcNAc...) asparagine glycan is attached at Asn5. Residues 25-45 (PLFFLFLGFYTVTVVGNLGLI) form a helical membrane-spanning segment. Residues 46-53 (TLIGLNSH) are Cytoplasmic-facing. Residues 54–74 (LHTPMYFFLFNLSLIDFCFST) form a helical membrane-spanning segment. The Extracellular portion of the chain corresponds to 75–98 (TITPKMLMSFVSRKNIISFTGCMT). A disulfide bridge links Cys96 with Cys188. A helical membrane pass occupies residues 99-119 (QLFFFCFFVVSESFILSAMAY). The Cytoplasmic portion of the chain corresponds to 120 to 138 (DRYVAICNPLLYTVTMSCQ). A helical membrane pass occupies residues 139–159 (VCLLLLLGAYGMGFAGAMAHT). Residues 160-196 (GSIMNLTFCADNLVNHFMCDILPLLELSCNSSYMNEL) lie on the Extracellular side of the membrane. N-linked (GlcNAc...) asparagine glycosylation is found at Asn164 and Asn189. The chain crosses the membrane as a helical span at residues 197 to 216 (VVFIVVAVDVGMPIVTVFIS). The Cytoplasmic portion of the chain corresponds to 217–236 (YALILSSILHNSSTEGRSKA). A helical membrane pass occupies residues 237–257 (FSTCSSHIIVVSLFFGSGAFM). The Extracellular segment spans residues 258 to 270 (YLKPLSILPLEQG). The helical transmembrane segment at 271-291 (KVSSLFYTIIVPVLNPLIYSL) threads the bilayer. Topologically, residues 292–310 (RNKDVKVALRRTLGRKIFS) are cytoplasmic.

This sequence belongs to the G-protein coupled receptor 1 family.

The protein localises to the cell membrane. Odorant receptor. The protein is Olfactory receptor 8B12 (OR8B12) of Homo sapiens (Human).